Reading from the N-terminus, the 182-residue chain is Flavodoxin (182 aa).

Residues 4 to 173 (IGLFFGSDTG…RLKGWLSLIA (170 aa)) enclose the Flavodoxin-like domain.

This sequence belongs to the flavodoxin family. FMN is required as a cofactor.

Functionally, low-potential electron donor to a number of redox enzymes. NifF is the electron donor to nitrogenase. The sequence is that of Flavodoxin (nifF) from Rhodobacter capsulatus (strain ATCC BAA-309 / NBRC 16581 / SB1003).